We begin with the raw amino-acid sequence, 146 residues long: Hemoglobin subunit beta (146 aa).

Residues His2–His146 enclose the Globin domain. Positions 63 and 92 each coordinate heme b.

The protein belongs to the globin family. In terms of assembly, heterotetramer of two alpha chains and two beta chains. As to expression, red blood cells.

In terms of biological role, involved in oxygen transport from the lung to the various peripheral tissues. The chain is Hemoglobin subunit beta (HBB) from Phalacrocorax carbo (Great cormorant).